The chain runs to 456 residues: Protein king tubby (456 aa).

Positions 111 to 202 (HELEDEESSP…SNGAGGESEG (92 aa)) are disordered. The span at 120 to 152 (PVTVIEQQQTAPHSANSTHSQRPSTTRQPSFND) shows a compositional bias: polar residues. A Phosphoserine modification is found at Ser149.

The protein belongs to the TUB family.

It localises to the cytoplasm. It is found in the nucleus. The protein resides in the cell projection. The protein localises to the cilium membrane. Its subcellular location is the rhabdomere. In Drosophila pseudoobscura pseudoobscura (Fruit fly), this protein is Protein king tubby.